The chain runs to 346 residues: Small glutamine-rich tetratricopeptide repeat-containing protein 2 (346 aa).

TPR repeat units lie at residues 102–135, 136–169, 170–203, and 205–229; these read AEDL…LPTN, AIYY…DPSY, FRGY…EGDN, and TEAM…EKTV. A disordered region spans residues 219-249; it reads VEQSLNLEKTVPEQSRDADVDASQGASAGGL. Residues 228-237 show a composition bias toward basic and acidic residues; the sequence is TVPEQSRDAD. Residue T308 is modified to Phosphothreonine. Positions 325 to 346 are disordered; it reads GNLFGGAGAQSTDETPDNENKQ.

The protein belongs to the SGT family. Interacts with HSC82, HSP104, MDY2, SSA1 and SSA2.

The protein resides in the cytoplasm. In terms of biological role, co-chaperone that binds to the molecular chaperone Hsp70 (SSA1 and SSA2). Regulates Hsp70 ATPase activity. Required for recovery from heat shock. In Saccharomyces cerevisiae (strain ATCC 204508 / S288c) (Baker's yeast), this protein is Small glutamine-rich tetratricopeptide repeat-containing protein 2 (SGT2).